The sequence spans 340 residues: MQSIPIKNVGADNVSQLIDRFERQYVYLRLSVTDVCNFRCNYCLPDGYKPPSHKQQFLSVSEIQRVVRAFADLGTEKVRITGGEPTLRKDFLEIAHTVSQTNGIKKVALTTNGYRMERDIDLWQQAGITDINVSVDSLDTRQFQLITGENKLQSILKGIDRAFEIGYRKIKVNAVLMKQYTAPELDKFLVWIKDKPIQMRFIELMETGEMDSFFQAQHLSGQSVMQRLLQEGWQLQPKALSDGPAKVLSHPDYQGEIGLIMPYEKNFCASCNRLRVSALGKLHLCLFGEEGIDLRDLLSEDTQQAQLEARLKAALQGKREHHYLHIGDSGIRNNLASIGG.

The Radical SAM core domain occupies 20–246 (RFERQYVYLR…PKALSDGPAK (227 aa)). Residue Arg-29 coordinates GTP. [4Fe-4S] cluster-binding residues include Cys-36 and Cys-40. Residue Tyr-42 coordinates S-adenosyl-L-methionine. Cys-43 contacts [4Fe-4S] cluster. Arg-79 contributes to the GTP binding site. S-adenosyl-L-methionine is bound at residue Gly-83. Thr-110 contributes to the GTP binding site. Ser-134 contacts S-adenosyl-L-methionine. Position 171 (Lys-171) interacts with GTP. Met-205 is a binding site for S-adenosyl-L-methionine. 2 residues coordinate [4Fe-4S] cluster: Cys-268 and Cys-271. Residue 273–275 (RLR) coordinates GTP. [4Fe-4S] cluster is bound at residue Cys-285.

The protein belongs to the radical SAM superfamily. MoaA family. In terms of assembly, monomer and homodimer. [4Fe-4S] cluster serves as cofactor.

The enzyme catalyses GTP + AH2 + S-adenosyl-L-methionine = (8S)-3',8-cyclo-7,8-dihydroguanosine 5'-triphosphate + 5'-deoxyadenosine + L-methionine + A + H(+). It participates in cofactor biosynthesis; molybdopterin biosynthesis. Functionally, catalyzes the cyclization of GTP to (8S)-3',8-cyclo-7,8-dihydroguanosine 5'-triphosphate. The polypeptide is GTP 3',8-cyclase (Actinobacillus pleuropneumoniae serotype 7 (strain AP76)).